We begin with the raw amino-acid sequence, 326 residues long: Acetyl-coenzyme A carboxylase carboxyl transferase subunit alpha (326 aa).

The CoA carboxyltransferase C-terminal domain occupies 44-298 (KLETRAMQLR…KQALLDNLDE (255 aa)).

The protein belongs to the AccA family. As to quaternary structure, acetyl-CoA carboxylase is a heterohexamer composed of biotin carboxyl carrier protein (AccB), biotin carboxylase (AccC) and two subunits each of ACCase subunit alpha (AccA) and ACCase subunit beta (AccD).

Its subcellular location is the cytoplasm. It catalyses the reaction N(6)-carboxybiotinyl-L-lysyl-[protein] + acetyl-CoA = N(6)-biotinyl-L-lysyl-[protein] + malonyl-CoA. The protein operates within lipid metabolism; malonyl-CoA biosynthesis; malonyl-CoA from acetyl-CoA: step 1/1. Its function is as follows. Component of the acetyl coenzyme A carboxylase (ACC) complex. First, biotin carboxylase catalyzes the carboxylation of biotin on its carrier protein (BCCP) and then the CO(2) group is transferred by the carboxyltransferase to acetyl-CoA to form malonyl-CoA. This is Acetyl-coenzyme A carboxylase carboxyl transferase subunit alpha from Nostoc sp. (strain PCC 7120 / SAG 25.82 / UTEX 2576).